The following is a 435-amino-acid chain: NADH-quinone oxidoreductase subunit D (435 aa).

Belongs to the complex I 49 kDa subunit family. NDH-1 is composed of 14 different subunits. Subunits NuoB, C, D, E, F, and G constitute the peripheral sector of the complex.

It localises to the cell inner membrane. It carries out the reaction a quinone + NADH + 5 H(+)(in) = a quinol + NAD(+) + 4 H(+)(out). Functionally, NDH-1 shuttles electrons from NADH, via FMN and iron-sulfur (Fe-S) centers, to quinones in the respiratory chain. The immediate electron acceptor for the enzyme in this species is believed to be ubiquinone. Couples the redox reaction to proton translocation (for every two electrons transferred, four hydrogen ions are translocated across the cytoplasmic membrane), and thus conserves the redox energy in a proton gradient. The chain is NADH-quinone oxidoreductase subunit D from Xylella fastidiosa (strain M23).